Consider the following 421-residue polypeptide: MDKIVIKGGNRLTGEVKVEGAKNAVLPVLTASLLASEGQSKLVNVPDLSDVVTINNVLSTLNANVEYNKEEGAVLVDASTTLKEEAPYEYVSKMRASILVMGPLLARLGHAIVALPGGCAIGARPIEQHIKGFEALGAEIHLENGNIYASTKDGLKGTDIHLDFPSVGATQNIIMAASLAKGKTVIENVAKEPEIVDLANYINEMGGKVTGAGTDTITIHGVEKLRGVEHSIIPDRIEAGTLIIAAAITRGDVFVRDAVKEHMTSLIYKLEEMGVNLDFQEDGVRVTAEDELKPVDVKTLPHPGFPTDMQSQMIALLLTAEGHKVITETVFENRFMHVAEFRRMNANITVEGRSAKIQGKSQLQGAQVKATDLRAAAALILAGLVAEGTTQVTELKHLDRGYVNFHEKLKSLGANIERVNY.

22 to 23 is a binding site for phosphoenolpyruvate; it reads KN. Residue R95 coordinates UDP-N-acetyl-alpha-D-glucosamine. The Proton donor role is filled by C119. Residue C119 is modified to 2-(S-cysteinyl)pyruvic acid O-phosphothioketal. UDP-N-acetyl-alpha-D-glucosamine-binding positions include 124 to 128, D308, and V330; that span reads RPIEQ.

Belongs to the EPSP synthase family. MurA subfamily.

The protein resides in the cytoplasm. The catalysed reaction is phosphoenolpyruvate + UDP-N-acetyl-alpha-D-glucosamine = UDP-N-acetyl-3-O-(1-carboxyvinyl)-alpha-D-glucosamine + phosphate. It participates in cell wall biogenesis; peptidoglycan biosynthesis. In terms of biological role, cell wall formation. Adds enolpyruvyl to UDP-N-acetylglucosamine. The chain is UDP-N-acetylglucosamine 1-carboxyvinyltransferase 2 from Staphylococcus haemolyticus (strain JCSC1435).